We begin with the raw amino-acid sequence, 160 residues long: Nucleotide-binding protein BAV0791 (160 aa).

This sequence belongs to the YajQ family.

Its function is as follows. Nucleotide-binding protein. The protein is Nucleotide-binding protein BAV0791 of Bordetella avium (strain 197N).